The sequence spans 140 residues: Mite allergen Der p 21.0101 (140 aa).

Residues 1-19 form the signal peptide; the sequence is MKFIITLFAAIVMAAAVSG. Immunodominant conformational IgE-binding epitope stretches follow at residues 20–53 and 108–140; these read FIVG…EKGL and YNYE…DEYY.

Belongs to the mite group 5 allergen family. In terms of assembly, monomer. Homodimer. Expressed in the epithelium, lumen and microvilli of the midgut, and in feces.

It is found in the cytoplasm. The protein localises to the endoplasmic reticulum. It localises to the vesicle. Its subcellular location is the secreted. In Dermatophagoides pteronyssinus (European house dust mite), this protein is Mite allergen Der p 21.0101.